The following is a 469-amino-acid chain: GDP-fucose protein O-fucosyltransferase 3 (469 aa).

The Cytoplasmic portion of the chain corresponds to 1 to 9 (MVNRIWEKR). Residues 10–30 (FWISCFFIIFLFILVIFQVMV) traverse the membrane as a helical; Signal-anchor for type II membrane protein segment. Over 31–469 (ELGRFEKKET…EFWNLVFKFW (439 aa)) the chain is Lumenal. N-linked (GlcNAc...) asparagine glycans are attached at residues Asn100, Asn158, Asn308, and Asn333. Residues Cys379 and Cys382 are joined by a disulfide bond. An N-linked (GlcNAc...) asparagine glycan is attached at Asn455.

This sequence belongs to the glycosyltransferase 10 family.

The protein resides in the endoplasmic reticulum membrane. It catalyses the reaction L-threonyl-[protein] + GDP-beta-L-fucose = 3-O-(alpha-L-fucosyl)-L-threonyl-[protein] + GDP + H(+). The catalysed reaction is L-seryl-[protein] + GDP-beta-L-fucose = 3-O-(alpha-L-fucosyl)-L-seryl-[protein] + GDP + H(+). It functions in the pathway protein modification; protein glycosylation. Its function is as follows. Protein O-fucosyltransferase that specifically catalyzes O-fucosylation of serine or threonine residues in EMI domains of target proteins. Attaches fucose through an O-glycosidic linkage. O-fucosylation of EMI domain-containing proteins may be required for facilitating protein folding and secretion. The chain is GDP-fucose protein O-fucosyltransferase 3 (fut10) from Xenopus laevis (African clawed frog).